The sequence spans 227 residues: tRNA (guanine-N(1)-)-methyltransferase (227 aa).

S-adenosyl-L-methionine-binding positions include G112 and 131–136 (LGDFVL).

It belongs to the RNA methyltransferase TrmD family. In terms of assembly, homodimer.

The protein localises to the cytoplasm. The catalysed reaction is guanosine(37) in tRNA + S-adenosyl-L-methionine = N(1)-methylguanosine(37) in tRNA + S-adenosyl-L-homocysteine + H(+). Its function is as follows. Specifically methylates guanosine-37 in various tRNAs. This Trichodesmium erythraeum (strain IMS101) protein is tRNA (guanine-N(1)-)-methyltransferase.